A 397-amino-acid polypeptide reads, in one-letter code: Elongation factor Tu (397 aa).

One can recognise a tr-type G domain in the interval 10–206 (KPHVNVGTIG…TMDTYFPQPE (197 aa)). The segment at 19 to 26 (GHVDHGKT) is G1. 19–26 (GHVDHGKT) is a binding site for GTP. Thr26 is a binding site for Mg(2+). The interval 60-64 (GITIA) is G2. The tract at residues 81–84 (DCPG) is G3. GTP is bound by residues 81-85 (DCPGH) and 136-139 (NKAD). A G4 region spans residues 136 to 139 (NKAD). A G5 region spans residues 174 to 176 (SAL).

This sequence belongs to the TRAFAC class translation factor GTPase superfamily. Classic translation factor GTPase family. EF-Tu/EF-1A subfamily. As to quaternary structure, monomer.

It localises to the cytoplasm. The enzyme catalyses GTP + H2O = GDP + phosphate + H(+). Functionally, GTP hydrolase that promotes the GTP-dependent binding of aminoacyl-tRNA to the A-site of ribosomes during protein biosynthesis. This chain is Elongation factor Tu, found in Coxiella burnetii (strain Dugway 5J108-111).